A 367-amino-acid chain; its full sequence is MGTVLSLSPASSAKGRRPGGLPEEKKKAPPAGDEALGGYGAPPVGKGGKGESRLKRPSVLISALTWKRLVAASAKKKKGSKKVTPKPASTGPDPLVQQRNRENLLRKGRDPPDGGGTAKPLAVPVPTVPAAAATCEPPSGGSAAAQPPGSGGGKPPPPPPPAPQVAPPVPGGSPRRVIVQASTGELLRCLGDFVCRRCYRLKELSPGELVGWFRGVDRSLLLQGWQDQAFITPANLVFVYLLCRESLRGDELASAAELQAAFLTCLYLAYSYMGNEISYPLKPFLVEPDKERFWQRCLRLIQRLSPQMLRLNADPHFFTQVFQDLKNEGEAAASGGGPPSGGAPAASSAARDSCAAGTKHWTMNLDR.

A compositionally biased stretch (polar residues) spans Met1–Ser11. Disordered stretches follow at residues Met1–Arg56, Ala72–Gln98, Ala131–Arg175, and Gly329–Arg367. The N-myristoyl glycine moiety is linked to residue Gly2. A compositionally biased stretch (basic residues) spans Ala74–Thr84. Residue Thr84 is modified to Phosphothreonine. Low complexity predominate over residues Ala131–Pro148. Positions Lys154–Gly171 are enriched in pro residues. Over residues Gly342–Gly357 the composition is skewed to low complexity.

The protein belongs to the cyclin-dependent kinase 5 activator family. Heterodimer of a catalytic subunit and a regulatory subunit. In terms of processing, myristoylated. The Gly-2-Ala mutant is absent of the cell periphery, suggesting that a proper myristoylation signal is essential for the proper distribution of CDK5R2 (p39). Brain and neuron specific.

The protein resides in the cell membrane. Functionally, activator of CDK5/TPKII. The polypeptide is Cyclin-dependent kinase 5 activator 2 (CDK5R2) (Homo sapiens (Human)).